The primary structure comprises 418 residues: Serine hydroxymethyltransferase (418 aa).

Residues Leu121 and 125–127 (GHL) each bind (6S)-5,6,7,8-tetrahydrofolate. Residue Lys230 is modified to N6-(pyridoxal phosphate)lysine. 355–357 (SPF) is a binding site for (6S)-5,6,7,8-tetrahydrofolate.

The protein belongs to the SHMT family. As to quaternary structure, homodimer. Pyridoxal 5'-phosphate serves as cofactor.

The protein localises to the cytoplasm. It catalyses the reaction (6R)-5,10-methylene-5,6,7,8-tetrahydrofolate + glycine + H2O = (6S)-5,6,7,8-tetrahydrofolate + L-serine. It functions in the pathway one-carbon metabolism; tetrahydrofolate interconversion. Its pathway is amino-acid biosynthesis; glycine biosynthesis; glycine from L-serine: step 1/1. Catalyzes the reversible interconversion of serine and glycine with tetrahydrofolate (THF) serving as the one-carbon carrier. This reaction serves as the major source of one-carbon groups required for the biosynthesis of purines, thymidylate, methionine, and other important biomolecules. Also exhibits THF-independent aldolase activity toward beta-hydroxyamino acids, producing glycine and aldehydes, via a retro-aldol mechanism. This is Serine hydroxymethyltransferase from Alcanivorax borkumensis (strain ATCC 700651 / DSM 11573 / NCIMB 13689 / SK2).